Consider the following 482-residue polypeptide: Regulator of nonsense transcripts UPF3 (482 aa).

A binds to UPF2 region spans residues 9 to 14; that stretch reads KVVVRH. Residues 9–219 form a necessary for interaction with UPF2 region; that stretch reads KVVVRHLPPS…EKESSKNVPR (211 aa). The sufficient for association with EJC core stretch occupies residues 53–482; sequence YSRAYVSFKA…MWIQKPSSGT (430 aa). Residues 173-482 form a disordered region; it reads PQGLSDIRRG…MWIQKPSSGT (310 aa). The segment covering 201 to 214 has biased composition (basic and acidic residues); sequence RNSEKKKYVEKESS. Composition is skewed to polar residues over residues 223–239, 292–308, and 325–336; these read ADVS…NSSG, DTNL…NQKS, and RPSQSSTFVQSE. Composition is skewed to basic and acidic residues over residues 337–348 and 370–394; these read QRVEPSEAENYK and EKQE…RDGS. Over residues 414 to 435 the composition is skewed to polar residues; that stretch reads SQRSGEVVNSSGGHTLENGSAR.

It belongs to the RENT3 family. As to quaternary structure, found in a post-splicing messenger ribonucleoprotein (mRNP) complex. Associates with the exon junction complex (EJC). Interacts with CPL1/FRY2.

It localises to the nucleus. It is found in the nucleolus. The protein localises to the cytoplasm. Its function is as follows. Recruits UPF2 at the cytoplasmic side of the nuclear envelope and the subsequent formation of an UPF1-UPF2-UPF3 surveillance complex (including UPF1 bound to release factors at the stalled ribosome) is believed to activate NMD. Binds spliced mRNA upstream of exon-exon junctions. Involved in nonsense-mediated decay (NMD) of mRNAs containing premature stop codons (premature termination codon PTC) by associating with the nuclear exon junction complex (EJC) and serving as link between the EJC core and NMD machinery. Eliminates the production of nonsense-containing RNAs (ncRNAs). Required for plant development and adaptation to environmental stresses, including plant defense and response to wounding. The polypeptide is Regulator of nonsense transcripts UPF3 (Arabidopsis thaliana (Mouse-ear cress)).